A 202-amino-acid polypeptide reads, in one-letter code: Imidazoleglycerol-phosphate dehydratase (202 aa).

The protein belongs to the imidazoleglycerol-phosphate dehydratase family.

The protein localises to the cytoplasm. It catalyses the reaction D-erythro-1-(imidazol-4-yl)glycerol 3-phosphate = 3-(imidazol-4-yl)-2-oxopropyl phosphate + H2O. Its pathway is amino-acid biosynthesis; L-histidine biosynthesis; L-histidine from 5-phospho-alpha-D-ribose 1-diphosphate: step 6/9. The protein is Imidazoleglycerol-phosphate dehydratase of Brucella anthropi (strain ATCC 49188 / DSM 6882 / CCUG 24695 / JCM 21032 / LMG 3331 / NBRC 15819 / NCTC 12168 / Alc 37) (Ochrobactrum anthropi).